Here is a 415-residue protein sequence, read N- to C-terminus: MSEVLQKAALAKEAAAEMVMKTTAEKNEALQCIADGLRNERRLILTENQKDIEAGRNRGLTPDIIDRLTLDEKRLLDIADAVELLIGLEDPVGESLETIQKENGLSIEKIRVPLGVVGMIYEARPNVTVDAATLCLKTGNAVVLRGSSSAIHSNIALVSVMKRALGLSKLPIDAVQLIEDTSKETAKQLFTLNDGLDVLIPRGGKNLIDLVVRESTVPVLETGAGNCHVYIDESADPQMASEVVINAKTQRPSVCNAIESLLIHEKWAEEHGRKLLNQLTEKGVELRGDQVICRLEPQAKQAEEADWGAEYLAPILSVKTVQDVQEAVRHIQQYGTNHSEAILTENAEHAAYFQTAVDAAAVYHNASTRFTDGFEFGYGAEIGISTQKLHARGPMGLPALTSTKIIIKGNGQIRV.

Belongs to the gamma-glutamyl phosphate reductase family.

The protein localises to the cytoplasm. It carries out the reaction L-glutamate 5-semialdehyde + phosphate + NADP(+) = L-glutamyl 5-phosphate + NADPH + H(+). The protein operates within amino-acid biosynthesis; L-proline biosynthesis; L-glutamate 5-semialdehyde from L-glutamate: step 2/2. Functionally, catalyzes the NADPH-dependent reduction of L-glutamate 5-phosphate into L-glutamate 5-semialdehyde and phosphate. The product spontaneously undergoes cyclization to form 1-pyrroline-5-carboxylate. This is Gamma-glutamyl phosphate reductase from Bacillus velezensis (strain DSM 23117 / BGSC 10A6 / LMG 26770 / FZB42) (Bacillus amyloliquefaciens subsp. plantarum).